A 116-amino-acid chain; its full sequence is Vesicle-associated membrane protein 2 (116 aa).

Residues 1–33 form a disordered region; that stretch reads MSATAATAPPAAPAGEGGPPAPPPNLTSNRRLQ. Serine 2 carries the N-acetylserine modification. The Cytoplasmic portion of the chain corresponds to 2 to 94; the sequence is SATAATAPPA…KRKYWWKNLK (93 aa). Residues 31-91 form the v-SNARE coiled-coil homology domain; sequence RLQQTQAQVD…AKLKRKYWWK (61 aa). The interval 92–116 is required for interaction with SEPT8; it reads NLKMMIILGVICAIILIIIIVYFST. Residues 95-114 traverse the membrane as a helical; Anchor for type IV membrane protein segment; it reads MMIILGVICAIILIIIIVYF. At 115–116 the chain is on the vesicular side; it reads ST.

It belongs to the synaptobrevin family. In terms of assembly, part of the SNARE core complex containing SNAP25, VAMP2 and STX1A; this complex constitutes the basic catalytic machinery of the complex neurotransmitter release apparatus. Recruited to the SNARE complex following binding of the SNARE complex component STX1A to STXBP1. This complex binds to CPLX1. Interacts with POPDC1 and STX4. Interacts with VAPA and VAPB. Interacts with WDFY2, PRKCZ and PRKCI. Forms a complex with WDFY2 and PRKCZ. Interacts (via N-terminus) with KCNB1 (via N-terminus and C-terminus); stimulates the channel inactivation rate of KCNB1. Interacts with SEPT8; the interaction inhibits interaction of VAMP2 with SYP. Interacts with SYP; the interaction is inhibited by interaction with SEPT8. Interacts with PICALM. Interacts with alpha-synuclein/SNCA. Interacts with STX3. Phosphorylated by PRKCZ in vitro and this phosphorylation is increased in the presence of WDFY2. In terms of processing, (Microbial infection) Targeted and hydrolyzed by C.botulinum neurotoxin type B (BoNT/B, botB) which hydrolyzes the 76-Gln-|-Phe-77 bond and probably inhibits neurotransmitter release. Post-translationally, (Microbial infection) Targeted and hydrolyzed by C.botulinum neurotoxin type D (BoNT/D, botD) which probably hydrolyzes the 59-Lys-|-Leu-60 bond and inhibits neurotransmitter release. Note that humans are not known to be infected by C.botulinum type D. (Microbial infection) Targeted and hydrolyzed by C.botulinum neurotoxin type F (BoNT/F, botF) which hydrolyzes the 58-Gln-|-Lys-59 bond and probably inhibits neurotransmitter release. In terms of processing, (Microbial infection) Targeted and hydrolyzed by C.tetani tetanus toxin (tetX) which hydrolyzes the 76-Gln-|-Phe-77 bond and probably inhibits neurotransmitter release. Nervous system and skeletal muscle.

It localises to the cytoplasmic vesicle. It is found in the secretory vesicle. Its subcellular location is the synaptic vesicle membrane. The protein resides in the cell membrane. In terms of biological role, involved in the targeting and/or fusion of transport vesicles to their target membrane. Major SNARE protein of synaptic vesicles which mediates fusion of synaptic vesicles to release neurotransmitters. Essential for fast vesicular exocytosis and activity-dependent neurotransmitter release as well as fast endocytosis that mediates rapid reuse of synaptic vesicles. Modulates the gating characteristics of the delayed rectifier voltage-dependent potassium channel KCNB1. This chain is Vesicle-associated membrane protein 2, found in Homo sapiens (Human).